We begin with the raw amino-acid sequence, 380 residues long: Cytochrome b (380 aa).

4 consecutive transmembrane segments (helical) span residues 34–54 (FGSL…LLAM), 78–99 (WLIR…YMHI), 114–134 (WNTG…GYVL), and 179–199 (FFAL…IHLT). Heme b contacts are provided by His-84 and His-98. 2 residues coordinate heme b: His-183 and His-197. His-202 is an a ubiquinone binding site. Transmembrane regions (helical) follow at residues 227 to 247 (LKDI…ALFS), 289 to 309 (LGGV…PLLH), 321 to 341 (LSQL…WIGS), and 348 to 368 (FIII…ILFP).

This sequence belongs to the cytochrome b family. In terms of assembly, the cytochrome bc1 complex contains 11 subunits: 3 respiratory subunits (MT-CYB, CYC1 and UQCRFS1), 2 core proteins (UQCRC1 and UQCRC2) and 6 low-molecular weight proteins (UQCRH/QCR6, UQCRB/QCR7, UQCRQ/QCR8, UQCR10/QCR9, UQCR11/QCR10 and a cleavage product of UQCRFS1). This cytochrome bc1 complex then forms a dimer. Heme b is required as a cofactor.

It is found in the mitochondrion inner membrane. Functionally, component of the ubiquinol-cytochrome c reductase complex (complex III or cytochrome b-c1 complex) that is part of the mitochondrial respiratory chain. The b-c1 complex mediates electron transfer from ubiquinol to cytochrome c. Contributes to the generation of a proton gradient across the mitochondrial membrane that is then used for ATP synthesis. This chain is Cytochrome b (MT-CYB), found in Oceanodroma furcata (Fork-tailed storm-petrel).